The chain runs to 360 residues: MTEQQSLEAIRYDHDHGQLKILNQLLLPSEYVYENVEGIEDGWQAIRQMKVRGAPAIAIVGMLSLAVELRSKSFTEMNEFDKFIRDSLEHLKTARPTAVNIFLACDLITKLIDNLIILGDEAVGVAKIEVIRHIEEMLHKDVESNKRIGSYGAEAILAKVPSKEKINVLTHCNTGSLATAGYGTALGVIRSLYGRDSIDRVFCTETRPYNQGSRLTAFELVHDGIPATLITDSMASLVMKKKDISAVVVGADRVLGNGDTANKIGTYQLAITAKYHKIPFYIAAPTTTIVLDDSKDIVIEERSHKEVTEIQGIPIAPSGINVYNPAFDVTPAELITGIITEVGVFSPSEMKSKLQTILNS.

Catalysis depends on D252, which acts as the Proton donor.

The protein belongs to the eIF-2B alpha/beta/delta subunits family. MtnA subfamily.

Its subcellular location is the cytoplasm. The protein resides in the nucleus. The enzyme catalyses 5-(methylsulfanyl)-alpha-D-ribose 1-phosphate = 5-(methylsulfanyl)-D-ribulose 1-phosphate. It functions in the pathway amino-acid biosynthesis; L-methionine biosynthesis via salvage pathway; L-methionine from S-methyl-5-thio-alpha-D-ribose 1-phosphate: step 1/6. Catalyzes the interconversion of methylthioribose-1-phosphate (MTR-1-P) into methylthioribulose-1-phosphate (MTRu-1-P). The chain is Methylthioribose-1-phosphate isomerase from Trichoplax adhaerens (Trichoplax reptans).